Here is a 997-residue protein sequence, read N- to C-terminus: LPS-assembly protein LptD (997 aa).

The N-terminal stretch at 1 to 27 (MLYSPLYQSIRLILFGALGLSSLTVSA) is a signal peptide.

This sequence belongs to the LptD family. In terms of assembly, component of the lipopolysaccharide transport and assembly complex. Interacts with LptE and LptA.

The protein localises to the cell outer membrane. Functionally, together with LptE, is involved in the assembly of lipopolysaccharide (LPS) at the surface of the outer membrane. The polypeptide is LPS-assembly protein LptD (Psychrobacter cryohalolentis (strain ATCC BAA-1226 / DSM 17306 / VKM B-2378 / K5)).